The primary structure comprises 490 residues: MSDLDGFCQNAFSDLNSLNQQVFKANYAVRGALAILADEIQDDLLENPSSYPFSEIVYANIGNPQQMGQSPITFVRQVLSLCQYPTLLDHAEEKWFQNLFPTDVVQRSKMLLKESGSLGAYSASQGIPLVRRHVADFIRARDGFDCEPSDIYLTSGASHAARLIMTLIIARPTDGVMVPAPQYPLYGAQIDLMSGSMVSYSLSEENNWDIDFDQFKKSFDEASKKGINVRLCVVINPGNPTGACISENSMEKVLRFAKAKGIVLLADEVYQNNIYQNKFHSFRRKLGELREKEPDNHWDQVSLISVNSVSKGQFGECGQRGGYLDVVNIPEPAKDQILKLATIDICPPVAGQLLVDMLVNPPKPGDPSYDLFIKEVDEIHEALRLQCRQLYEGTKRMKRVSCLEPHGAMYLHPSVSLPEKLITTAKAQKIQPDEFYAIELLKRSGICVVPGSGFGQPEGDYHIRITFLAKGTEYIERFVKAHNEIMDLYE.

Ala-157, Ser-158, Tyr-183, Asn-239, and Ser-308 together coordinate pyridoxal 5'-phosphate. N6-(pyridoxal phosphate)lysine is present on Lys-311. Residue Arg-320 participates in pyridoxal 5'-phosphate binding.

It belongs to the class-I pyridoxal-phosphate-dependent aminotransferase family. Alanine aminotransferase subfamily. Homodimer. Pyridoxal 5'-phosphate is required as a cofactor.

It localises to the cytoplasm. It is found in the mitochondrion. The catalysed reaction is L-alanine + 2-oxoglutarate = pyruvate + L-glutamate. Its pathway is amino-acid degradation; L-alanine degradation via transaminase pathway; pyruvate from L-alanine: step 1/1. Alanine aminotransferase involved in both alanine biosynthesis and utilization. The polypeptide is Putative alanine aminotransferase (alt1) (Schizosaccharomyces pombe (strain 972 / ATCC 24843) (Fission yeast)).